The following is a 364-amino-acid chain: BTB/POZ and TAZ domain-containing protein 2 (364 aa).

One can recognise a BTB domain in the interval 34–106 (SDVEIVTSDN…LYSSSLTEDE (73 aa)). A Nuclear localization signal motif is present at residues 203-212 (RKKRRRRHRK). A TAZ-type zinc finger spans residues 215 to 316 (DLYMQLSEAM…PDSCRVPLCR (102 aa)). The caM-binding stretch occupies residues 327–350 (KMGEDTKWKLLVTRVVSAKAMTSL).

As to quaternary structure, interacts with CUL3A. Interacts with GTE11/BET10 through the BTB domain. In terms of tissue distribution, preferentially expressed in young leaves and roots.

The protein localises to the nucleus. The protein resides in the cytoplasm. It participates in protein modification; protein ubiquitination. Functionally, may act as a substrate-specific adapter of an E3 ubiquitin-protein ligase complex (CUL3-RBX1-BTB) which mediates the ubiquitination and subsequent proteasomal degradation of target proteins. Plays a key role as a component of the TAC1-mediated telomerase activation pathway certainly by targeting a telomerase repressor to degradation. Seems to occupy an integral position in a complex signaling network that perceives, integrates, and responds to multiple, and sometimes competing, signals. Enhances responses to auxin in postgermination and vegetative development. Also negatively regulates ABA- and sugar-mediated inhibition of the germination. Essential for female and male gametophyte development. This Arabidopsis thaliana (Mouse-ear cress) protein is BTB/POZ and TAZ domain-containing protein 2 (BT2).